We begin with the raw amino-acid sequence, 643 residues long: 1-deoxy-D-xylulose-5-phosphate synthase (643 aa).

Thiamine diphosphate contacts are provided by residues histidine 72 and 113-115 (GHA). Aspartate 144 contacts Mg(2+). Residues 145–146 (GA), asparagine 174, tyrosine 287, and glutamate 370 each bind thiamine diphosphate. Residue asparagine 174 coordinates Mg(2+).

Belongs to the transketolase family. DXPS subfamily. In terms of assembly, homodimer. The cofactor is Mg(2+). Thiamine diphosphate serves as cofactor.

The catalysed reaction is D-glyceraldehyde 3-phosphate + pyruvate + H(+) = 1-deoxy-D-xylulose 5-phosphate + CO2. It participates in metabolic intermediate biosynthesis; 1-deoxy-D-xylulose 5-phosphate biosynthesis; 1-deoxy-D-xylulose 5-phosphate from D-glyceraldehyde 3-phosphate and pyruvate: step 1/1. Functionally, catalyzes the acyloin condensation reaction between C atoms 2 and 3 of pyruvate and glyceraldehyde 3-phosphate to yield 1-deoxy-D-xylulose-5-phosphate (DXP). In Prochlorococcus marinus (strain MIT 9211), this protein is 1-deoxy-D-xylulose-5-phosphate synthase.